We begin with the raw amino-acid sequence, 30 residues long: Cycloviolacin-O5 (30 aa).

Positions 1–30 form a cross-link, cyclopeptide (Gly-Asn); it reads GTPCGESCVWIPCISSAVGCSCKNKVCYKN. 3 cysteine pairs are disulfide-bonded: C4-C20, C8-C22, and C13-C27.

Post-translationally, this is a cyclic peptide.

Its function is as follows. Probably participates in a plant defense mechanism. In Viola odorata (Sweet violet), this protein is Cycloviolacin-O5.